Here is a 67-residue protein sequence, read N- to C-terminus: ATP synthase protein 8 (67 aa).

A helical membrane pass occupies residues Thr8 to Met24. Lys54 carries the N6-acetyllysine; alternate modification. At Lys54 the chain carries N6-succinyllysine; alternate. Residue Lys57 is modified to N6-acetyllysine.

It belongs to the ATPase protein 8 family. F-type ATPases have 2 components, CF(1) - the catalytic core - and CF(0) - the membrane proton channel. Component of an ATP synthase complex composed of ATP5PB, ATP5MC1, ATP5F1E, ATP5PD, ATP5ME, ATP5PF, ATP5MF, MT-ATP6, MT-ATP8, ATP5F1A, ATP5F1B, ATP5F1D, ATP5F1C, ATP5PO, ATP5MG, ATP5MK and ATP5MJ. Interacts with PRICKLE3.

The protein localises to the mitochondrion membrane. Functionally, mitochondrial membrane ATP synthase (F(1)F(0) ATP synthase or Complex V) produces ATP from ADP in the presence of a proton gradient across the membrane which is generated by electron transport complexes of the respiratory chain. F-type ATPases consist of two structural domains, F(1) - containing the extramembraneous catalytic core and F(0) - containing the membrane proton channel, linked together by a central stalk and a peripheral stalk. During catalysis, ATP synthesis in the catalytic domain of F(1) is coupled via a rotary mechanism of the central stalk subunits to proton translocation. Part of the complex F(0) domain. Minor subunit located with subunit a in the membrane. In Artibeus jamaicensis (Jamaican fruit-eating bat), this protein is ATP synthase protein 8 (MT-ATP8).